A 547-amino-acid chain; its full sequence is MLKRLLKRPSLNLLAWLLLAAFYISICLNIAFFKQVLQALPLDSLHNVLVFLSMPVVAFSVINIVLTLSSFLWLNRPLACLFILVGAAAQYFIMTYGIVIDRSMIANIIDTTPAESYALMTPQMLLTLGFSGVLAALIACWIKIKPATSRLRSVLFRGANILVSVLLILLVAALFYKDYASLFRNNKELVKSLSPSNSIVASWSWYSHQRLANLPLVRIGEDAHRNPLMQNEKRKNLTILIVGETSRAENFSLNGYPRETNPRLAKDNVVYFPNTASCGTATAVSVPCMFSDMPREHYKEELAQHQEGVLDIIQRAGINVLWNDNDGGCKGACDRVPHQNVTALNLPDQCINGECYDEVLFHGLEEYINNLQGDGVIVLHTIGSHGPTYYNRYPPQFRKFTPTCDTNEIQTCTKEQLVNTYDNTLVYVDYIVDKAINLLKEHQDKFTTSLVYLSDHGESLGENGIYLHGLPYAIAPDSQKQVPMLLWLSEDYQKRYQVDQNCLQKQAQTQHYSQDNLFSTLLGLTGVETKYYQAADDILQTCRRVSE.

Topologically, residues M1–P9 are cytoplasmic. A helical transmembrane segment spans residues S10–I30. At A31–N47 the chain is on the periplasmic side. Residues V48–L68 traverse the membrane as a helical segment. Over S69–A79 the chain is Cytoplasmic. A helical membrane pass occupies residues C80–I100. Residues D101–Q123 are Periplasmic-facing. A helical transmembrane segment spans residues M124–I144. Topologically, residues K145 to V154 are cytoplasmic. A helical transmembrane segment spans residues L155–F175. The Periplasmic segment spans residues Y176–E547.

Belongs to the phosphoethanolamine transferase family. EptA subfamily. Has been isolated as a 91 kDa complex containing ZipA-EptA and an unidentified 24 kDa protein.

The protein resides in the cell inner membrane. Functionally, catalyzes the addition of a phosphoethanolamine moiety to the lipid A. The phosphoethanolamine modification is required for resistance to polymyxin. The sequence is that of Phosphoethanolamine transferase EptA (eptA) from Escherichia coli (strain K12).